A 183-amino-acid polypeptide reads, in one-letter code: RNA pyrophosphohydrolase (183 aa).

Residues 6 to 149 (GYRPNVGIIL…KREVYRLALE (144 aa)) enclose the Nudix hydrolase domain. Positions 38–59 (GGINAGETPEQAMFRELEEEVG) match the Nudix box motif.

The protein belongs to the Nudix hydrolase family. RppH subfamily. A divalent metal cation is required as a cofactor.

Accelerates the degradation of transcripts by removing pyrophosphate from the 5'-end of triphosphorylated RNA, leading to a more labile monophosphorylated state that can stimulate subsequent ribonuclease cleavage. This chain is RNA pyrophosphohydrolase, found in Thiobacillus denitrificans (strain ATCC 25259 / T1).